Consider the following 412-residue polypeptide: Serine hydroxymethyltransferase (412 aa).

Residues L117 and 121–123 (GHL) contribute to the (6S)-5,6,7,8-tetrahydrofolate site. K226 is modified (N6-(pyridoxal phosphate)lysine).

The protein belongs to the SHMT family. In terms of assembly, homodimer. It depends on pyridoxal 5'-phosphate as a cofactor.

It localises to the cytoplasm. It carries out the reaction (6R)-5,10-methylene-5,6,7,8-tetrahydrofolate + glycine + H2O = (6S)-5,6,7,8-tetrahydrofolate + L-serine. Its pathway is one-carbon metabolism; tetrahydrofolate interconversion. It functions in the pathway amino-acid biosynthesis; glycine biosynthesis; glycine from L-serine: step 1/1. Its function is as follows. Catalyzes the reversible interconversion of serine and glycine with tetrahydrofolate (THF) serving as the one-carbon carrier. This reaction serves as the major source of one-carbon groups required for the biosynthesis of purines, thymidylate, methionine, and other important biomolecules. Also exhibits THF-independent aldolase activity toward beta-hydroxyamino acids, producing glycine and aldehydes, via a retro-aldol mechanism. The sequence is that of Serine hydroxymethyltransferase from Staphylococcus aureus (strain bovine RF122 / ET3-1).